A 375-amino-acid polypeptide reads, in one-letter code: Platelet-derived growth factor receptor-like protein (375 aa).

Residues 1–21 form the signal peptide; it reads MKFWLLLGLLLLHEALEDVAG. Residues 20–63 are disordered; sequence AGQHSPKNKRPKEQGENRIKPTNKKAKPKIPKVKDRDSTDSTAK. The span at 40 to 50 shows a compositional bias: basic residues; sequence PTNKKAKPKIP. The region spanning 47–159 is the Ig-like C2-type 1 domain; that stretch reads PKIPKVKDRD…GYICRRDEAK (113 aa). The cysteines at positions 96 and 143 are disulfide-linked. Asparagine 219 carries an N-linked (GlcNAc...) asparagine glycan. The region spanning 272–375 is the Ig-like C2-type 2 domain; sequence PSTTILASSN…TTVATTVEFS (104 aa). Cysteine 293 and cysteine 357 are oxidised to a cystine.

Forms a complex composed of PDGFRL, TNK2 and GRB2.

The protein localises to the secreted. The sequence is that of Platelet-derived growth factor receptor-like protein (Pdgfrl) from Mus musculus (Mouse).